A 188-amino-acid polypeptide reads, in one-letter code: MWLIVGLGNPGERYARTRHNIGFRSVETLAERHGLTFRNQRAKSEIAEGIIRGQRVALVKPQTYMNLSGQAVAALRQWYKIDPARELLVIYDDLDLPFAKLRLRERGSAGTHNGMRSIVGQLGTTEFPRLRIGIGQPPGQMDAADYVLSRFTPEEEAVLPEVLARVADAVEVVVSEGLTAAMNRYNPL.

Y14 is a binding site for tRNA. The active-site Proton acceptor is the H19. TRNA contacts are provided by Y64, N66, and N113.

The protein belongs to the PTH family. As to quaternary structure, monomer.

The protein localises to the cytoplasm. The enzyme catalyses an N-acyl-L-alpha-aminoacyl-tRNA + H2O = an N-acyl-L-amino acid + a tRNA + H(+). In terms of biological role, hydrolyzes ribosome-free peptidyl-tRNAs (with 1 or more amino acids incorporated), which drop off the ribosome during protein synthesis, or as a result of ribosome stalling. Catalyzes the release of premature peptidyl moieties from peptidyl-tRNA molecules trapped in stalled 50S ribosomal subunits, and thus maintains levels of free tRNAs and 50S ribosomes. The chain is Peptidyl-tRNA hydrolase from Chloroflexus aggregans (strain MD-66 / DSM 9485).